Consider the following 46-residue polypeptide: Homeobox protein Hox-D4 (46 aa).

The segment at residues 1–46 is a DNA-binding region (homeobox); sequence VNSNYTGGEPKRSRTAYTRQQVLELEKEFLFNRYLTRRRRIQHTLT.

Belongs to the Antp homeobox family. Deformed subfamily. In terms of assembly, forms a DNA-binding heterodimer with transcription factor PBX1.

It localises to the nucleus. In terms of biological role, sequence-specific transcription factor which is part of a developmental regulatory system that provides cells with specific positional identities on the anterior-posterior axis. This Ovis aries (Sheep) protein is Homeobox protein Hox-D4 (HOXD4).